Consider the following 212-residue polypeptide: Large ribosomal subunit protein uL4 (212 aa).

It belongs to the universal ribosomal protein uL4 family. Part of the 50S ribosomal subunit.

One of the primary rRNA binding proteins, this protein initially binds near the 5'-end of the 23S rRNA. It is important during the early stages of 50S assembly. It makes multiple contacts with different domains of the 23S rRNA in the assembled 50S subunit and ribosome. In terms of biological role, forms part of the polypeptide exit tunnel. In Phenylobacterium zucineum (strain HLK1), this protein is Large ribosomal subunit protein uL4.